The chain runs to 569 residues: Urease subunit beta (569 aa).

Positions 131–569 constitute a Urease domain; it reads GGIDTHIHFI…VSLAQLFSIF (439 aa). Residues His136, His138, and Lys219 each contribute to the Ni(2+) site. Lys219 carries the post-translational modification N6-carboxylysine. His221 is a substrate binding site. 2 residues coordinate Ni(2+): His248 and His274. Residue His322 is the Proton donor of the active site. Ni(2+) is bound at residue Asp362.

Belongs to the metallo-dependent hydrolases superfamily. Urease alpha subunit family. Heterohexamer of 3 UreA (alpha) and 3 UreB (beta) subunits. It depends on Ni cation as a cofactor. Post-translationally, carboxylation allows a single lysine to coordinate two nickel ions.

The protein resides in the cytoplasm. It catalyses the reaction urea + 2 H2O + H(+) = hydrogencarbonate + 2 NH4(+). Its pathway is nitrogen metabolism; urea degradation; CO(2) and NH(3) from urea (urease route): step 1/1. This is Urease subunit beta from Helicobacter pylori (strain Shi470).